The following is a 264-amino-acid chain: Carbohydrate deacetylase (264 aa).

Catalysis depends on D20, which acts as the Proton acceptor. The Mg(2+) site is built by D21, H60, and H127. H215 functions as the Proton donor in the catalytic mechanism.

It belongs to the YdjC deacetylase family. Homodimer. It depends on Mg(2+) as a cofactor.

Functionally, probably catalyzes the deacetylation of acetylated carbohydrates an important step in the degradation of oligosaccharides. The sequence is that of Carbohydrate deacetylase from Thermus thermophilus (strain ATCC 27634 / DSM 579 / HB8).